Reading from the N-terminus, the 169-residue chain is ALK and LTK ligand 2a (169 aa).

An N-terminal signal peptide occupies residues 1–25 (MRALRAPVLVMGLVLLICTAAQSDA). Residues 45–68 (ENSADDESAQKTESAPEPKDTHHL) are disordered. Residues 52–67 (SAQKTESAPEPKDTHH) are compositionally biased toward basic and acidic residues. 2 disulfides stabilise this stretch: cysteine 130-cysteine 166 and cysteine 144-cysteine 153.

The protein belongs to the ALKAL family. As to quaternary structure, homodimer. As to expression, expressed at high level in the notochord and iridophore stripes of the trunk, as well as in the eye and swim bladder.

Its subcellular location is the secreted. It is found in the cell membrane. Functionally, cytokine that acts as a physiological ligand for receptor tyrosine kinases LTK and ALK. Required for neural crest cell differentiation and iridophore development during embryonic iridophore development and adult stripe development by acting as a receptor for LTK. The protein is ALK and LTK ligand 2a of Danio rerio (Zebrafish).